A 527-amino-acid polypeptide reads, in one-letter code: MSAHSTAVGTAKRRTFAIISHPDAGKTTITEKLLLFGNAIQVGGSVKGKKGPHAKSDWMSMEQERGISVTSSVMQFPYKERTVNLLDTPGHEDFSEDTYRTLTAVDSVLMVIDGAKGVEDRTIKLMEVCRLRDTPILSFINKMDRDIRDPIDVMDEIETVLNIEAAPINWPIGMGKEFKGVYNLYTDIIHVFHHGQGSRIPDDTQIKGLNSPEADALLGAYAADIRDEIELVKGATHKFDLDAYLAGKLTPVFFGTALGNFGVREMLDGFVEWAPPPLDREANTRVVSAVEDKFSGFVFKIQANMDPKHRDRIAFMRVCSGTYTRGMKMRHVRLGKDVKISDAVTFLAGDRSQVEEAISGDIIGLHNHGTIQIGDTFTEGEDLKFTGIPHFAPELFRRIRLKDPLKVKQLQKGLQQLSEEGSTQVFFPLRNNDIIVGAVGVLQFEVVAYRLKDEYKVEAIYEPVSVATARWVDCEDDKKMAEFKRKCEDNLAIDGGGHLTYLAPTRVNLSLSQERYPDVLFRSTREH.

The region spanning 11–278 (AKRRTFAIIS…GFVEWAPPPL (268 aa)) is the tr-type G domain. Residues 20–27 (SHPDAGKT), 87–91 (DTPGH), and 141–144 (NKMD) each bind GTP.

Belongs to the TRAFAC class translation factor GTPase superfamily. Classic translation factor GTPase family. PrfC subfamily.

It is found in the cytoplasm. Its function is as follows. Increases the formation of ribosomal termination complexes and stimulates activities of RF-1 and RF-2. It binds guanine nucleotides and has strong preference for UGA stop codons. It may interact directly with the ribosome. The stimulation of RF-1 and RF-2 is significantly reduced by GTP and GDP, but not by GMP. The sequence is that of Peptide chain release factor 3 from Saccharophagus degradans (strain 2-40 / ATCC 43961 / DSM 17024).